Consider the following 105-residue polypeptide: U21-theraphotoxin-Cg1a 4 (105 aa).

An N-terminal signal peptide occupies residues 1-21 (MKVSVLITLAVLGVMFLLTSA). Residues 22-48 (EERGSDQMDSPAWLKSMEIIFQSEERE) constitute a propeptide that is removed on maturation. 3 disulfide bridges follow: C49/C63, C56/C68, and C62/C76. V82 is subject to Valine amide. Residues 83–105 (GKWEMLINMNIFRIVFSYSMCTV) constitute a propeptide that is removed on maturation.

Belongs to the neurotoxin 10 (Hwtx-1) family. 05 (F4a) subfamily. In terms of tissue distribution, expressed by the venom gland.

The protein localises to the secreted. Its function is as follows. Probable ion channel inhibitor. The sequence is that of U21-theraphotoxin-Cg1a 4 from Chilobrachys guangxiensis (Chinese earth tiger tarantula).